Here is a 295-residue protein sequence, read N- to C-terminus: Tissue factor (295 aa).

The signal sequence occupies residues 1-28 (MAIPMRPRLLAALAPTFLGFLLLQVAVG). Residues 29 to 252 (AGTPPGKAFN…TEQWKSVLGE (224 aa)) lie on the Extracellular side of the membrane. Asparagine 38 and asparagine 58 each carry an N-linked (GlcNAc...) asparagine glycan. Cysteine 76 and cysteine 84 are oxidised to a cystine. 4 N-linked (GlcNAc...) asparagine glycosylation sites follow: asparagine 95, asparagine 109, asparagine 170, and asparagine 201. Cysteine 219 and cysteine 242 are disulfide-bonded. The WKS motif signature appears at 246–248 (WKS). Residues 253-275 (TLIIVGAVVFLVTVFIILLTISL) form a helical membrane-spanning segment. Cysteine 276 carries the S-palmitoyl cysteine lipid modification. Residues 276–295 (CKRRKNRAGQKRKNTPSRLA) lie on the Cytoplasmic side of the membrane.

This sequence belongs to the tissue factor family. As to quaternary structure, interacts with HSPE; the interaction, inhibited by heparin, promotes the generation of activated factor X and activates coagulation in the presence of activated factor VII.

Its subcellular location is the membrane. In terms of biological role, initiates blood coagulation by forming a complex with circulating factor VII or VIIa. The [TF:VIIa] complex activates factors IX or X by specific limited proteolysis. TF plays a role in normal hemostasis by initiating the cell-surface assembly and propagation of the coagulation protease cascade. The polypeptide is Tissue factor (F3) (Rattus norvegicus (Rat)).